The primary structure comprises 292 residues: uncharacterized protein (292 aa).

The interval 62–81 (ESSSDSDMGFHESQQNQKSN) is disordered.

This is an uncharacterized protein from Homo sapiens (Human).